The primary structure comprises 1503 residues: Lysine-specific demethylase 5B-B (1503 aa).

The 42-residue stretch at 15-56 (CPVFEPSWEEFKDPFAFINKIRPIAEKTGICKVRPPPDWQPP) folds into the JmjN domain. An ARID domain is found at 80 to 170 (TRVKLNFLDQ…ILYPYNLFQS (91 aa)). The span at 202–211 (VPLQPSNTSA) shows a compositional bias: polar residues. Disordered regions lie at residues 202 to 223 (VPLQ…KTES) and 268 to 287 (IKEL…NIPP). Basic and acidic residues predominate over residues 268–278 (IKELNPEPEKS). A PHD-type 1 zinc finger spans residues 295–345 (LYVCLVCGKGNDEDRLLLCDGCDDSYHTFCLIPPLTDVPKGDWRCPKCLTQ). The region spanning 439-605 (KYLQCGWNLN…LGRQCVDHYR (167 aa)) is the JmjC domain. The Fe cation site is built by histidine 485, aspartate 488, and histidine 573. The PHD-type 2 zinc finger occupies 1168–1216 (LKVCVCQKPAMGAMLQCELCRDAFHSVCVRGPSDPLDPEAWLCPLCLRS). Disordered stretches follow at residues 1362-1381 (TNTS…TETD) and 1403-1442 (ERGT…DSEE). Residues 1444–1497 (MTLCPAESCLQPEGEEVDWVQCDCCNRWFHMICVGVSAELAAEEDYMCVSCSTS) form a PHD-type 3 zinc finger.

Belongs to the JARID1 histone demethylase family. Requires Fe(2+) as cofactor.

Its subcellular location is the nucleus. The enzyme catalyses N(6),N(6),N(6)-trimethyl-L-lysyl(4)-[histone H3] + 3 2-oxoglutarate + 3 O2 = L-lysyl(4)-[histone H3] + 3 formaldehyde + 3 succinate + 3 CO2. Its function is as follows. Histone demethylase that demethylates 'Lys-4' of histone H3, thereby playing a central role in histone code. Does not demethylate histone H3 'Lys-9' or H3 'Lys-27'. Demethylates trimethylated, dimethylated and monomethylated H3 'Lys-4'. Acts as a transcriptional corepressor. This Danio rerio (Zebrafish) protein is Lysine-specific demethylase 5B-B (kdm5bb).